Consider the following 105-residue polypeptide: Flagellar transcriptional regulator FlhD (105 aa).

Belongs to the FlhD family. As to quaternary structure, homodimer; disulfide-linked. Forms a heterohexamer composed of two FlhC and four FlhD subunits. Each FlhC binds a FlhD dimer, forming a heterotrimer, and a hexamer assembles by dimerization of two heterotrimers.

Its subcellular location is the cytoplasm. In terms of biological role, functions in complex with FlhC as a master transcriptional regulator that regulates transcription of several flagellar and non-flagellar operons by binding to their promoter region. Activates expression of class 2 flagellar genes, including fliA, which is a flagellum-specific sigma factor that turns on the class 3 genes. Also regulates genes whose products function in a variety of physiological pathways. The chain is Flagellar transcriptional regulator FlhD from Cupriavidus necator (strain ATCC 17699 / DSM 428 / KCTC 22496 / NCIMB 10442 / H16 / Stanier 337) (Ralstonia eutropha).